The chain runs to 37 residues: Cytochrome b6-f complex subunit 7 (37 aa).

Residues 11–29 (AVILMVLVLFGLAWGFLIL) form a helical membrane-spanning segment.

The protein belongs to the PetM family. As to quaternary structure, the 4 large subunits of the cytochrome b6-f complex are cytochrome b6, subunit IV (17 kDa polypeptide, PetD), cytochrome f and the Rieske protein, while the 4 small subunits are PetG, PetL, PetM and PetN. The complex functions as a dimer.

Its subcellular location is the cellular thylakoid membrane. Its function is as follows. Component of the cytochrome b6-f complex, which mediates electron transfer between photosystem II (PSII) and photosystem I (PSI), cyclic electron flow around PSI, and state transitions. This chain is Cytochrome b6-f complex subunit 7, found in Crocosphaera subtropica (strain ATCC 51142 / BH68) (Cyanothece sp. (strain ATCC 51142)).